The primary structure comprises 315 residues: Methionyl-tRNA formyltransferase (315 aa).

110-113 (SLLP) is a binding site for (6S)-5,6,7,8-tetrahydrofolate.

This sequence belongs to the Fmt family.

The catalysed reaction is L-methionyl-tRNA(fMet) + (6R)-10-formyltetrahydrofolate = N-formyl-L-methionyl-tRNA(fMet) + (6S)-5,6,7,8-tetrahydrofolate + H(+). Its function is as follows. Attaches a formyl group to the free amino group of methionyl-tRNA(fMet). The formyl group appears to play a dual role in the initiator identity of N-formylmethionyl-tRNA by promoting its recognition by IF2 and preventing the misappropriation of this tRNA by the elongation apparatus. The sequence is that of Methionyl-tRNA formyltransferase from Lactobacillus delbrueckii subsp. bulgaricus (strain ATCC BAA-365 / Lb-18).